We begin with the raw amino-acid sequence, 252 residues long: tRNA1(Val) (adenine(37)-N6)-methyltransferase (252 aa).

Belongs to the methyltransferase superfamily. tRNA (adenine-N(6)-)-methyltransferase family.

The protein localises to the cytoplasm. The catalysed reaction is adenosine(37) in tRNA1(Val) + S-adenosyl-L-methionine = N(6)-methyladenosine(37) in tRNA1(Val) + S-adenosyl-L-homocysteine + H(+). Functionally, specifically methylates the adenine in position 37 of tRNA(1)(Val) (anticodon cmo5UAC). This Yersinia pseudotuberculosis serotype IB (strain PB1/+) protein is tRNA1(Val) (adenine(37)-N6)-methyltransferase.